The following is a 121-amino-acid chain: Large ribosomal subunit protein bL19 (121 aa).

This sequence belongs to the bacterial ribosomal protein bL19 family.

In terms of biological role, this protein is located at the 30S-50S ribosomal subunit interface and may play a role in the structure and function of the aminoacyl-tRNA binding site. The polypeptide is Large ribosomal subunit protein bL19 (Porphyromonas gingivalis (strain ATCC BAA-308 / W83)).